The sequence spans 122 residues: Large ribosomal subunit protein bL20 (122 aa).

Belongs to the bacterial ribosomal protein bL20 family.

In terms of biological role, binds directly to 23S ribosomal RNA and is necessary for the in vitro assembly process of the 50S ribosomal subunit. It is not involved in the protein synthesizing functions of that subunit. This is Large ribosomal subunit protein bL20 (rplT) from Treponema pallidum (strain Nichols).